The sequence spans 304 residues: MQKFDTKTFQGLILTLQDYWARQGCTIVQPLDMEVGAGTSHPMTCLRAIGPEPIAAAYVQPSRRPTDGRYGENPNRLQHYYQFQVIIKPSPDNIQELYLGSLKELGLDPTIHDIRFVEDNWENPTLGAWGLGWEVWLNGMEVTQFTYFQQVGGLECKPVTGEITYGLERLAMYIQGVDSVYDLIWCDGPLGTTTYGDIYHQNEVEQSTYNFEYADVDFLFSCFEQYEKEAQSLLALETPLPLPAYERILKAGHTFNLLDARKAISVTERQRYILRIRTLTKAVAEAYYASREALGFPMCKKNQN.

This sequence belongs to the class-II aminoacyl-tRNA synthetase family. As to quaternary structure, tetramer of two alpha and two beta subunits.

The protein localises to the cytoplasm. The catalysed reaction is tRNA(Gly) + glycine + ATP = glycyl-tRNA(Gly) + AMP + diphosphate. The sequence is that of Glycine--tRNA ligase alpha subunit from Yersinia pseudotuberculosis serotype O:1b (strain IP 31758).